The sequence spans 217 residues: Sentrin-specific protease 8 (217 aa).

M1 is modified (N-acetylmethionine). A protease region spans residues 11–174; sequence SLLRQSDVSL…MYVICNTEAL (164 aa). Residues H102 and D119 contribute to the active site. The Nucleophile role is filled by C163.

It belongs to the peptidase C48 family.

In terms of biological role, protease that catalyzes two essential functions in the NEDD8 pathway: processing of full-length NEDD8 to its mature form and deconjugation of NEDD8 from targeted proteins such as cullins or p53. In Rattus norvegicus (Rat), this protein is Sentrin-specific protease 8 (Senp8).